A 528-amino-acid chain; its full sequence is Glucose-6-phosphate isomerase (528 aa).

Residue Glu322 is the Proton donor of the active site. Active-site residues include His351 and Lys455.

Belongs to the GPI family.

It is found in the cytoplasm. The enzyme catalyses alpha-D-glucose 6-phosphate = beta-D-fructose 6-phosphate. It participates in carbohydrate biosynthesis; gluconeogenesis. The protein operates within carbohydrate degradation; glycolysis; D-glyceraldehyde 3-phosphate and glycerone phosphate from D-glucose: step 2/4. In terms of biological role, catalyzes the reversible isomerization of glucose-6-phosphate to fructose-6-phosphate. The chain is Glucose-6-phosphate isomerase from Nostoc punctiforme (strain ATCC 29133 / PCC 73102).